Here is a 374-residue protein sequence, read N- to C-terminus: Ribosomal RNA large subunit methyltransferase G (374 aa).

This sequence belongs to the methyltransferase superfamily. RlmG family.

The protein localises to the cytoplasm. It catalyses the reaction guanosine(1835) in 23S rRNA + S-adenosyl-L-methionine = N(2)-methylguanosine(1835) in 23S rRNA + S-adenosyl-L-homocysteine + H(+). Its function is as follows. Specifically methylates the guanine in position 1835 (m2G1835) of 23S rRNA. This Pseudomonas putida (strain ATCC 47054 / DSM 6125 / CFBP 8728 / NCIMB 11950 / KT2440) protein is Ribosomal RNA large subunit methyltransferase G.